The primary structure comprises 199 residues: NAD(P)H dehydrogenase (quinone) (199 aa).

The region spanning 4–190 (VLVLYYSAYG…AGARYQGRQI (187 aa)) is the Flavodoxin-like domain. FMN contacts are provided by residues 10–15 (SAYGHI) and 78–80 (TRF). Tyrosine 12 contacts NAD(+). Tryptophan 98 provides a ligand contact to substrate. FMN is bound by residues 113 to 119 (SSATQHG) and histidine 134.

Belongs to the WrbA family. It depends on FMN as a cofactor.

The enzyme catalyses a quinone + NADH + H(+) = a quinol + NAD(+). It carries out the reaction a quinone + NADPH + H(+) = a quinol + NADP(+). The sequence is that of NAD(P)H dehydrogenase (quinone) from Bradyrhizobium diazoefficiens (strain JCM 10833 / BCRC 13528 / IAM 13628 / NBRC 14792 / USDA 110).